The sequence spans 185 residues: Ribosome-recycling factor (185 aa).

The protein belongs to the RRF family.

Its subcellular location is the cytoplasm. Functionally, responsible for the release of ribosomes from messenger RNA at the termination of protein biosynthesis. May increase the efficiency of translation by recycling ribosomes from one round of translation to another. The chain is Ribosome-recycling factor from Pseudothermotoga lettingae (strain ATCC BAA-301 / DSM 14385 / NBRC 107922 / TMO) (Thermotoga lettingae).